Here is a 582-residue protein sequence, read N- to C-terminus: Semenogelin-2 (582 aa).

A signal peptide spans 1–23; sequence MKSIILFVLSLLLILEKQAAVMG. Disordered regions lie at residues 25-62, 131-156, 173-192, 272-477, and 502-554; these read KGGS…SKGS, KGGQ…KGIF, KEQA…GSQS, NLNQ…EQRQ, and VEGK…SGAH. Positions 50–59 are enriched in basic and acidic residues; sequence GQKDKQHTES. 2 stretches are compositionally biased toward polar residues: residues 137–151 and 174–192; these read HGTQ…NSPS and EQAS…GSQS. The segment covering 292–310 has biased composition (basic and acidic residues); sequence RTEERQLNHGEKSVQKDVS. Over residues 325–335 the composition is skewed to polar residues; sequence KSQNQVTIPSQ. The segment covering 336–345 has biased composition (basic and acidic residues); the sequence is DQEHGHKENK. A compositionally biased stretch (polar residues) spans 385–395; that stretch reads KSQNQVTIPSQ. The span at 396-405 shows a compositional bias: basic and acidic residues; it reads DQEHGHKENK. Residues 445-455 show a composition bias toward polar residues; it reads KSQNQVTIPSQ. The span at 456-465 shows a compositional bias: basic and acidic residues; the sequence is DQEHGHKENK. 2 stretches are compositionally biased toward polar residues: residues 466–477 and 506–529; these read ISYQSSSTEQRQ and SQIQ…NSGK. Residues 537–546 are compositionally biased toward basic and acidic residues; that stretch reads LLSHEQEGRY.

It belongs to the semenogelin family. Interacts with SERPINA5.

It localises to the secreted. Its function is as follows. Participates in the formation of a gel matrix (sperm coagulum) entrapping the accessory gland secretions and ejaculated spermatozoa. This chain is Semenogelin-2 (SEMG2), found in Macaca nemestrina (Pig-tailed macaque).